The primary structure comprises 474 residues: Trigger factor (474 aa).

Residues 171–258 (GDVAVIDFQG…LKELKTRDLP (88 aa)) enclose the PPIase FKBP-type domain. A disordered region spans residues 441 to 474 (TEVDAASATVETTATETAEEAPEAPKAKKGKKKA). A compositionally biased stretch (low complexity) spans 444–456 (DAASATVETTATE).

It belongs to the FKBP-type PPIase family. Tig subfamily.

It localises to the cytoplasm. It carries out the reaction [protein]-peptidylproline (omega=180) = [protein]-peptidylproline (omega=0). Involved in protein export. Acts as a chaperone by maintaining the newly synthesized protein in an open conformation. Functions as a peptidyl-prolyl cis-trans isomerase. This chain is Trigger factor, found in Synechococcus sp. (strain ATCC 27144 / PCC 6301 / SAUG 1402/1) (Anacystis nidulans).